The primary structure comprises 310 residues: Oxygen-dependent coproporphyrinogen-III oxidase (310 aa).

Position 93 (Ser93) interacts with substrate. A divalent metal cation-binding residues include His97 and His107. The active-site Proton donor is the His107. Substrate is bound at residue 109–111; that stretch reads NVR. His146 and His176 together coordinate a divalent metal cation. Positions 241 to 276 are important for dimerization; the sequence is YVEFNLVYDRGTLFGLQSGGRTESILMSLPPQVRWS. Residue 259 to 261 coordinates substrate; sequence GGR.

Belongs to the aerobic coproporphyrinogen-III oxidase family. As to quaternary structure, homodimer. A divalent metal cation serves as cofactor.

The protein localises to the cytoplasm. The catalysed reaction is coproporphyrinogen III + O2 + 2 H(+) = protoporphyrinogen IX + 2 CO2 + 2 H2O. It participates in porphyrin-containing compound metabolism; protoporphyrin-IX biosynthesis; protoporphyrinogen-IX from coproporphyrinogen-III (O2 route): step 1/1. In terms of biological role, involved in the heme biosynthesis. Catalyzes the aerobic oxidative decarboxylation of propionate groups of rings A and B of coproporphyrinogen-III to yield the vinyl groups in protoporphyrinogen-IX. This is Oxygen-dependent coproporphyrinogen-III oxidase from Pseudomonas fluorescens (strain SBW25).